Consider the following 220-residue polypeptide: Phosphatidylserine decarboxylase proenzyme (220 aa).

Serine 188 acts as the Schiff-base intermediate with substrate; via pyruvic acid in catalysis. Residue serine 188 is modified to Pyruvic acid (Ser); by autocatalysis.

This sequence belongs to the phosphatidylserine decarboxylase family. PSD-A subfamily. Heterodimer of a large membrane-associated beta subunit and a small pyruvoyl-containing alpha subunit. Pyruvate serves as cofactor. Post-translationally, is synthesized initially as an inactive proenzyme. Formation of the active enzyme involves a self-maturation process in which the active site pyruvoyl group is generated from an internal serine residue via an autocatalytic post-translational modification. Two non-identical subunits are generated from the proenzyme in this reaction, and the pyruvate is formed at the N-terminus of the alpha chain, which is derived from the carboxyl end of the proenzyme. The post-translation cleavage follows an unusual pathway, termed non-hydrolytic serinolysis, in which the side chain hydroxyl group of the serine supplies its oxygen atom to form the C-terminus of the beta chain, while the remainder of the serine residue undergoes an oxidative deamination to produce ammonia and the pyruvoyl prosthetic group on the alpha chain.

The protein localises to the cell membrane. It catalyses the reaction a 1,2-diacyl-sn-glycero-3-phospho-L-serine + H(+) = a 1,2-diacyl-sn-glycero-3-phosphoethanolamine + CO2. The protein operates within phospholipid metabolism; phosphatidylethanolamine biosynthesis; phosphatidylethanolamine from CDP-diacylglycerol: step 2/2. Its function is as follows. Catalyzes the formation of phosphatidylethanolamine (PtdEtn) from phosphatidylserine (PtdSer). The polypeptide is Phosphatidylserine decarboxylase proenzyme (Parabacteroides distasonis (strain ATCC 8503 / DSM 20701 / CIP 104284 / JCM 5825 / NCTC 11152)).